A 577-amino-acid chain; its full sequence is Moesin (577 aa).

The FERM domain occupies 2–295 (PKTINVRVTT…GNHELYMRRR (294 aa)). Ser74 is subject to Phosphoserine. The residue at position 79 (Lys79) is an N6-acetyllysine. The residue at position 83 (Lys83) is an N6-succinyllysine. Positions 115–120 (IYCPPE) match the [IL]-x-C-x-x-[DE] motif motif. Tyr116 carries the post-translational modification Phosphotyrosine. Cys117 is modified (S-nitrosocysteine). 2 positions are modified to N6-acetyllysine: Lys139 and Lys165. Residues 375-401 (LEQERKRAQSEAEKLAKERQEAEEAKE) are compositionally biased toward basic and acidic residues. 2 disordered regions span residues 375-409 (LEQE…ASQD) and 466-518 (AMST…NERV). Ser407 bears the Phosphoserine mark. Over residues 476–487 (AENEQDEQDENG) the composition is skewed to acidic residues. Over residues 492–518 (AELRADAMAKDRSEEERTTEAEKNERV) the composition is skewed to basic and acidic residues. Position 527 is a phosphoserine (Ser527). Phosphothreonine; by ROCK2 and STK10 is present on Thr558.

In terms of assembly, in resting T-cells, part of a PAG1-NHERF1-MSN complex which is disrupted upon TCR activation. Interacts with NHERF1. Interacts with PPP1R16B. Interacts with PDZD8. Interacts with SELPLG and SYK; these interactions mediate the activation of SYK by SELPLG. Interacts with PDPN (via cytoplasmic domain); this interaction activates RHOA and promotes epithelial-mesenchymal transition. Interacts with SPN/CD43 cytoplasmic tail. Interacts with CD44. Interacts with ICAM2. Interacts with ICAM3 (via C-terminus). Interacts with PDZD8. Interacts with F-actin. Interacts with CD46. Interacts with PTPN6. Post-translationally, phosphorylation on Thr-558 is crucial for the formation of microvilli-like structures. Phosphorylation by ROCK2 suppresses the head-to-tail association of the N-terminal and C-terminal halves resulting in an opened conformation which is capable of actin and membrane-binding. Phosphorylation on Thr-558 by STK10 negatively regulates lymphocyte migration and polarization. In terms of processing, S-nitrosylation of Cys-117 is induced by interferon-gamma and oxidatively-modified low-densitity lipoprotein (LDL(ox)) implicating the iNOS-S100A8/9 transnitrosylase complex.

The protein localises to the cell membrane. It is found in the cytoplasm. The protein resides in the cytoskeleton. Its subcellular location is the apical cell membrane. It localises to the cell projection. The protein localises to the microvillus membrane. It is found in the microvillus. With respect to regulation, a head-to-tail association, of the N-terminal and C-terminal halves results in a closed conformation (inactive form) which is incapable of actin or membrane-binding. Ezrin-radixin-moesin (ERM) family protein that connects the actin cytoskeleton to the plasma membrane and thereby regulates the structure and function of specific domains of the cell cortex. Tethers actin filaments by oscillating between a resting and an activated state providing transient interactions between moesin and the actin cytoskeleton. Once phosphorylated on its C-terminal threonine, moesin is activated leading to interaction with F-actin and cytoskeletal rearrangement. These rearrangements regulate many cellular processes, including cell shape determination, membrane transport, and signal transduction. The role of moesin is particularly important in immunity acting on both T and B-cells homeostasis and self-tolerance, regulating lymphocyte egress from lymphoid organs. Modulates phagolysosomal biogenesis in macrophages. Participates also in immunologic synapse formation. The polypeptide is Moesin (Bos taurus (Bovine)).